Consider the following 426-residue polypeptide: Molybdopterin molybdenumtransferase 1 (426 aa).

The protein belongs to the MoeA family. Mg(2+) serves as cofactor.

It carries out the reaction adenylyl-molybdopterin + molybdate = Mo-molybdopterin + AMP + H(+). The protein operates within cofactor biosynthesis; molybdopterin biosynthesis. Its function is as follows. Catalyzes the insertion of molybdate into adenylated molybdopterin with the concomitant release of AMP. The polypeptide is Molybdopterin molybdenumtransferase 1 (moeA1) (Mycobacterium tuberculosis (strain ATCC 25618 / H37Rv)).